The sequence spans 72 residues: Beta-defensin 104A (72 aa).

The signal sequence occupies residues 1–22 (MRRLVLLLAISLLLYQDLPVRS). Intrachain disulfides connect Cys30–Cys57, Cys37–Cys51, and Cys41–Cys58.

Belongs to the beta-defensin family.

The protein resides in the secreted. In terms of biological role, has antimicrobial activity. The polypeptide is Beta-defensin 104A (DEFB104A) (Gorilla gorilla gorilla (Western lowland gorilla)).